The chain runs to 201 residues: ATP-dependent dethiobiotin synthetase BioD (201 aa).

ATP is bound at residue D11 to H16. T15 lines the Mg(2+) pocket. The active site involves K31. ATP is bound by residues D40 and E93–G96. Residues D40 and E93 each coordinate Mg(2+).

Belongs to the dethiobiotin synthetase family. Homodimer. The cofactor is Mg(2+).

It is found in the cytoplasm. It carries out the reaction (7R,8S)-7,8-diammoniononanoate + CO2 + ATP = (4R,5S)-dethiobiotin + ADP + phosphate + 3 H(+). It functions in the pathway cofactor biosynthesis; biotin biosynthesis; biotin from 7,8-diaminononanoate: step 1/2. Catalyzes a mechanistically unusual reaction, the ATP-dependent insertion of CO2 between the N7 and N8 nitrogen atoms of 7,8-diaminopelargonic acid (DAPA, also called 7,8-diammoniononanoate) to form a ureido ring. The chain is ATP-dependent dethiobiotin synthetase BioD from Campylobacter jejuni subsp. jejuni serotype O:6 (strain 81116 / NCTC 11828).